The primary structure comprises 227 residues: NAD(P)H-quinone oxidoreductase subunit K, chloroplastic (227 aa).

C43, C44, C108, and C139 together coordinate [4Fe-4S] cluster.

It belongs to the complex I 20 kDa subunit family. In terms of assembly, NDH is composed of at least 16 different subunits, 5 of which are encoded in the nucleus. The cofactor is [4Fe-4S] cluster.

The protein resides in the plastid. It is found in the chloroplast thylakoid membrane. It catalyses the reaction a plastoquinone + NADH + (n+1) H(+)(in) = a plastoquinol + NAD(+) + n H(+)(out). The enzyme catalyses a plastoquinone + NADPH + (n+1) H(+)(in) = a plastoquinol + NADP(+) + n H(+)(out). NDH shuttles electrons from NAD(P)H:plastoquinone, via FMN and iron-sulfur (Fe-S) centers, to quinones in the photosynthetic chain and possibly in a chloroplast respiratory chain. The immediate electron acceptor for the enzyme in this species is believed to be plastoquinone. Couples the redox reaction to proton translocation, and thus conserves the redox energy in a proton gradient. The sequence is that of NAD(P)H-quinone oxidoreductase subunit K, chloroplastic from Citrus sinensis (Sweet orange).